The primary structure comprises 413 residues: Glycosyl hydrolase family 109 protein 2 (413 aa).

NAD(+) contacts are provided by residues 26–27, Asp-48, 96–99, 116–117, and Asn-145; these read NR, WLTH, and EV. Tyr-174 provides a ligand contact to substrate. NAD(+) contacts are provided by residues 191–195 and Tyr-208; that span reads YHNHW. Substrate-binding positions include 208-211 and Tyr-290; that span reads YPTH.

This sequence belongs to the Gfo/Idh/MocA family. Glycosyl hydrolase 109 subfamily. The cofactor is NAD(+).

In terms of biological role, glycosidase. The chain is Glycosyl hydrolase family 109 protein 2 from Phocaeicola vulgatus (strain ATCC 8482 / DSM 1447 / JCM 5826 / CCUG 4940 / NBRC 14291 / NCTC 11154) (Bacteroides vulgatus).